Reading from the N-terminus, the 828-residue chain is Chitin synthase 7 (828 aa).

Transmembrane regions (helical) follow at residues 17-37 (VIVG…VAAF), 57-77 (AVVV…IMVV), 95-115 (VGLQ…PWLF), 444-464 (FMQN…LAIL), 473-493 (LPVG…IYFG), and 501-521 (IWLY…YMVY). Asn615 carries an N-linked (GlcNAc...) asparagine glycan. Low complexity-rich tracts occupy residues 740 to 752 (SLVS…SNSN) and 813 to 822 (SNNDPNNSNS). Disordered stretches follow at residues 740 to 780 (SLVS…LGRA) and 793 to 828 (LEIG…HQQR). Asn818 is a glycosylation site (N-linked (GlcNAc...) asparagine).

The protein belongs to the chitin synthase family. Class VII subfamily.

It localises to the membrane. It catalyses the reaction [(1-&gt;4)-N-acetyl-beta-D-glucosaminyl](n) + UDP-N-acetyl-alpha-D-glucosamine = [(1-&gt;4)-N-acetyl-beta-D-glucosaminyl](n+1) + UDP + H(+). Polymerizes chitin, a structural polymer of the cell wall and septum, by transferring the sugar moiety of UDP-GlcNAc to the non-reducing end of the growing chitin polymer. Required for normal appressorial chitin content and for the normal formation and function of these infection structures. This chain is Chitin synthase 7, found in Pyricularia oryzae (strain 70-15 / ATCC MYA-4617 / FGSC 8958) (Rice blast fungus).